The chain runs to 358 residues: Histidinol-phosphate aminotransferase (358 aa).

At Lys-217 the chain carries N6-(pyridoxal phosphate)lysine.

The protein belongs to the class-II pyridoxal-phosphate-dependent aminotransferase family. Histidinol-phosphate aminotransferase subfamily. As to quaternary structure, homodimer. The cofactor is pyridoxal 5'-phosphate.

The enzyme catalyses L-histidinol phosphate + 2-oxoglutarate = 3-(imidazol-4-yl)-2-oxopropyl phosphate + L-glutamate. It participates in amino-acid biosynthesis; L-histidine biosynthesis; L-histidine from 5-phospho-alpha-D-ribose 1-diphosphate: step 7/9. This chain is Histidinol-phosphate aminotransferase, found in Ruminiclostridium cellulolyticum (strain ATCC 35319 / DSM 5812 / JCM 6584 / H10) (Clostridium cellulolyticum).